The sequence spans 356 residues: Tyrosine recombinase XerS (356 aa).

In terms of domain architecture, Core-binding (CB) spans 16 to 121 (IMPWYVLDYY…ALSSLYKYLT (106 aa)). A Tyr recombinase domain is found at 169 to 354 (AFLDYVDKEY…VNDEQKNALD (186 aa)). Catalysis depends on residues Arg210, Lys234, His306, Arg309, and His332. The O-(3'-phospho-DNA)-tyrosine intermediate role is filled by Tyr341.

This sequence belongs to the 'phage' integrase family. XerS subfamily.

The protein localises to the cytoplasm. With respect to regulation, ftsK is required for recombination. Its function is as follows. Site-specific tyrosine recombinase, which acts by catalyzing the cutting and rejoining of the recombining DNA molecules. Essential to convert dimers of the bacterial chromosome into monomers to permit their segregation at cell division. The sequence is that of Tyrosine recombinase XerS from Streptococcus pyogenes serotype M6 (strain ATCC BAA-946 / MGAS10394).